We begin with the raw amino-acid sequence, 118 residues long: Large ribosomal subunit protein uL18 (118 aa).

It belongs to the universal ribosomal protein uL18 family. In terms of assembly, part of the 50S ribosomal subunit; part of the 5S rRNA/L5/L18/L25 subcomplex. Contacts the 5S and 23S rRNAs.

In terms of biological role, this is one of the proteins that bind and probably mediate the attachment of the 5S RNA into the large ribosomal subunit, where it forms part of the central protuberance. The polypeptide is Large ribosomal subunit protein uL18 (Cupriavidus pinatubonensis (strain JMP 134 / LMG 1197) (Cupriavidus necator (strain JMP 134))).